The primary structure comprises 845 residues: Nuclear pore complex protein Nup107 (845 aa).

Disordered stretches follow at residues 1-26 (MADSPFPRSSRSGLLRTTLNSSMPPQ) and 677-702 (QNRPKKPQTSHAASSQDNFTERMASE). Composition is skewed to polar residues over residues 7–26 (PRSSRSGLLRTTLNSSMPPQ) and 685–694 (TSHAASSQDN).

It belongs to the nucleoporin Nup84/Nup107 family. Part of the nuclear pore complex (NPC). As to expression, expressed in spermatocytes (at protein level).

The protein resides in the nucleus. It is found in the nuclear pore complex. The protein localises to the nucleus envelope. Its subcellular location is the nucleus membrane. It localises to the cytoplasm. The protein resides in the cytoskeleton. It is found in the spindle. The protein localises to the chromosome. Its subcellular location is the nucleus matrix. Functionally, plays a role in nuclear pore complex (NPC) assembly and maintenance. Required for nuclear import of Mad. Mediates the association between the nuclear pore complex and a subset of active chromatin regions adjacent to lamin-associated domains. Plays a role in double strand break repair by relocalizing the heterochromatic double strand breaks (DSBs) to the nuclear periphery as part of the homologous recombination (HR) repair process. Regulates cytokinesis during spermatocyte meiosis by maintaining type-B lamin Lam localization to the spindle envelope. Regulates female gonad development and oogenesis. The protein is Nuclear pore complex protein Nup107 of Drosophila melanogaster (Fruit fly).